The chain runs to 189 residues: MSDKIFHNLSGKTLVATPHVITKGIYHKSLIYMLSHTEEGAIGLIFNRLVNHIDLKSFFKIKNDEITTPVMVPIYLGGPVEHEKGFFLHSSDYNKNLLLDFHNDLAVSSNLEISEDIAFGKGPKNSLFIIGYTAWKPGQLEEELETNLWLVMDCNKEFIFADNPESKWHNALKHLGIDEIHFSSQIGNA.

Belongs to the UPF0301 (AlgH) family.

This Rickettsia peacockii (strain Rustic) protein is UPF0301 protein RPR_01165.